A 1449-amino-acid polypeptide reads, in one-letter code: MEEYELREIALQEGGSNLDINTPPNYDNPVGDGSSPPDSPDIQKSENQFKNVERELEIDSKQYLAGHDAENNHDENDEDFKLRRYFENSQRMALGNGQKPKKMGVSIRNLTVVGRGADQSVIADMSTPFISFFNLFKPSTWKEKGSTFDILHDITLFNRDGGMLLVLGRPGSGCSTLLRLISNQRGSYVEVKGDIKYGGIPAKEWKRYQGESIYTPEEDTHHPTLTVRQTLDFALKCKTIHNRLPDEKKRTYRQKIFDLLLGMFGIVHQADTIVGNEFIRGLSGGERKRLTITEAMVSSASITCYDCSTRGLDAASALDYAKSIRIMSDTLDKTTIASFYQASDSIYNLFDNVAIIEKGRLIYFGPGNKAKQYFIDLGFDCEPRKSTPDFLTGVTNPQERIIRQGFEGRVPETSADFEAAWRNSSMYRDMLEEQKEYERKIEIEQPAVDFIQEVKAEKSRTTPKRSIYTTSYITQVKALIVRNSQIIWGDKFSLISRYLSVFTQSFVYGSIFFQMEKTIPGLFTRGGAIFSAILFNAFLSEAELPLTMYGRRILQKQRSYAMYRPSALHIAQIVTDIPLTMIQVFLFSIVVYFMFGLQYNAGKFFIFCFTLVGATLATTNLFRVFGNFSPSLYISQNVMNVILIFMITYCGYTIPKPKMHPWFAWFYWANPFSYAFKALMANEFGDLSFDCHDTAIPFDPKNPTRYDNDYRVCASPGAVEGILSVEGKDYLDQYLHFRSDDLTQNVFITYLWWVLFTAMNMFAMEYFDWTGGGYSHKVYKKGKAPKMNDAEEEKKQNQIVANATSKMKDTLKMRGGIFTWQNINYTVPVKGGKRLLLDNVEGWIKPGQMTALMGSSGAGKTTLLDVLAKRKTMGEVQGKCFLNGKPLEIDFERITGYVEQMDVHNPGLTVREALRFSAKLRQEPSVSLEEKFDYVEHVLEMMEMKHLGDALIGTLETGVGISVEERKRLTIGVELVAKPHILFLDEPTSGLDAQSSYNIVKFIRKLADAGMPLVCTIHQPSSVLFEHFDRILLLAKGGKTVYFGDIGERSKTLTSYFERYGVRPCTESENPAEYILEATGAGVHGKSDVNWPETWKQSPELQEIERELAALEAAGPSSTEDHGKPREFATSVWYQTIEVYKRLNLIWWRDPFYTYGSFIQSALAGLIIGFTFWSLQGSSSDMNQRVFFIFEALILGILLIFVVLPQFIMQKEYFKRDFASKFYSWFPFAISIVVVELPFITVSGTIFFFCSFWTAGLNTEYNDINFYFWFIFILFLYFCVSFGQAVAAICFNMFLAHTLIPLLIVFLFLFCGVMVIPSSIPTFWRGWVYHLNPCRYFMEGIVTNVLKHTDVKCTSEDFTHFTNPEAVNGVTCKQYFPISEPLTGYVEAINEGDESKCGYCLYNNGEEYYNTLGWSFDNRWRNLALIICFWIFNTLMVITFVYITRKPRR.

A compositionally biased stretch (basic and acidic residues) spans 1 to 10 (MEEYELREIA). Residues 1–49 (MEEYELREIALQEGGSNLDINTPPNYDNPVGDGSSPPDSPDIQKSENQF) are disordered. The segment covering 14-25 (GGSNLDINTPPN) has biased composition (polar residues). In terms of domain architecture, ABC transporter 1 spans 130 to 383 (ISFFNLFKPS…FIDLGFDCEP (254 aa)). An ABC transmembrane type-2 1 domain is found at 488–731 (WGDKFSLISR…ILSVEGKDYL (244 aa)). A run of 5 helical transmembrane segments spans residues 519 to 539 (IPGL…NAFL), 577 to 597 (IPLT…MFGL), 602 to 622 (GKFF…TNLF), 634 to 654 (ISQN…GYTI), and 747 to 767 (FITY…MEYF). The region spanning 818 to 1062 (FTWQNINYTV…LTSYFERYGV (245 aa)) is the ABC transporter 2 domain. 854 to 861 (GSSGAGKT) lines the ATP pocket. The ABC transmembrane type-2 2 domain occupies 1152–1386 (FYTYGSFIQS…PISEPLTGYV (235 aa)). 6 helical membrane-spanning segments follow: residues 1155 to 1175 (YGSF…FWSL), 1188 to 1208 (FIFE…PQFI), 1228 to 1248 (FAIS…TIFF), 1266 to 1286 (FYFW…GQAV), 1296 to 1316 (AHTL…VMVI), and 1423 to 1443 (LALI…FVYI).

This sequence belongs to the ABC transporter superfamily. ABCG family. PDR (TC 3.A.1.205) subfamily.

Its subcellular location is the membrane. In Dictyostelium discoideum (Social amoeba), this protein is ABC transporter G family member 21 (abcG21).